The following is a 393-amino-acid chain: NAD(P)H-quinone oxidoreductase subunit H, chloroplastic (393 aa).

The protein belongs to the complex I 49 kDa subunit family. NDH is composed of at least 16 different subunits, 5 of which are encoded in the nucleus.

Its subcellular location is the plastid. It is found in the chloroplast thylakoid membrane. It carries out the reaction a plastoquinone + NADH + (n+1) H(+)(in) = a plastoquinol + NAD(+) + n H(+)(out). It catalyses the reaction a plastoquinone + NADPH + (n+1) H(+)(in) = a plastoquinol + NADP(+) + n H(+)(out). Its function is as follows. NDH shuttles electrons from NAD(P)H:plastoquinone, via FMN and iron-sulfur (Fe-S) centers, to quinones in the photosynthetic chain and possibly in a chloroplast respiratory chain. The immediate electron acceptor for the enzyme in this species is believed to be plastoquinone. Couples the redox reaction to proton translocation, and thus conserves the redox energy in a proton gradient. This chain is NAD(P)H-quinone oxidoreductase subunit H, chloroplastic, found in Panax ginseng (Korean ginseng).